Reading from the N-terminus, the 147-residue chain is Protein phosphatase 1 regulatory subunit 14B (147 aa).

Positions 1 to 15 (MADSGPAGGAALAAP) are enriched in low complexity. Positions 1–55 (MADSGPAGGAALAAPAPGPGSGSTGPRVYFQSPPGAAGEGPGGADDDGPVRRQGK) are disordered. Position 2 is an N-acetylalanine (Ala2). Ser21 bears the Phosphoserine mark. Tyr29 carries the phosphotyrosine modification. Ser32 carries the post-translational modification Phosphoserine. A Phosphothreonine modification is found at Thr57. Residues 61–103 (DRKELRKRLNLEEWILEQLTRLYDCQEEEIPELEIDVDELLDM) are a coiled coil.

Belongs to the PP1 inhibitor family. Phosphorylated primarily on Thr-57 by PKC (in vitro). An unknown Ser is also phosphorylated by PKC (in vitro). As to expression, ubiquitous. Highly expressed in testis. Detected at low levels in the other tissues tested. Highly expressed in cardiac muscle, bladder and aorta (at protein level).

The protein localises to the cytoplasm. In terms of biological role, inhibitor of PPP1CA. Has over 50-fold higher inhibitory activity when phosphorylated. This Mus musculus (Mouse) protein is Protein phosphatase 1 regulatory subunit 14B (Ppp1r14b).